A 335-amino-acid chain; its full sequence is DNA-directed RNA polymerase subunit alpha (335 aa).

The interval 1-231 (MVREKVTVST…DLFIPFLHME (231 aa)) is alpha N-terminal domain (alpha-NTD). The alpha C-terminal domain (alpha-CTD) stretch occupies residues 262–335 (KKKLSLESIF…FALDLPKNLN (74 aa)).

This sequence belongs to the RNA polymerase alpha chain family. As to quaternary structure, in plastids the minimal PEP RNA polymerase catalytic core is composed of four subunits: alpha, beta, beta', and beta''. When a (nuclear-encoded) sigma factor is associated with the core the holoenzyme is formed, which can initiate transcription.

The protein localises to the plastid. It carries out the reaction RNA(n) + a ribonucleoside 5'-triphosphate = RNA(n+1) + diphosphate. Functionally, DNA-dependent RNA polymerase catalyzes the transcription of DNA into RNA using the four ribonucleoside triphosphates as substrates. The chain is DNA-directed RNA polymerase subunit alpha from Cuscuta reflexa (Southern Asian dodder).